A 266-amino-acid chain; its full sequence is Succinate dehydrogenase [ubiquinone] iron-sulfur subunit, mitochondrial (266 aa).

The transit peptide at 1-20 (MLNVLLRRKAFCLVTKKGMA) directs the protein to the mitochondrion. In terms of domain architecture, 2Fe-2S ferredoxin-type spans 36–127 (FKVYRWNPDE…QLKIYPLPHM (92 aa)). Residues cysteine 87, cysteine 92, cysteine 95, and cysteine 107 each contribute to the [2Fe-2S] cluster site. The 4Fe-4S ferredoxin-type domain occupies 169-199 (DRKKLDGLYECILCACCSTSCPSYWWNQEQY). Residues cysteine 179, cysteine 182, and cysteine 185 each contribute to the [4Fe-4S] cluster site. Cysteine 189 provides a ligand contact to [3Fe-4S] cluster. A ubiquinone is bound at residue tryptophan 194. Residues cysteine 236 and cysteine 242 each contribute to the [3Fe-4S] cluster site. Residue cysteine 246 participates in [4Fe-4S] cluster binding.

The protein belongs to the succinate dehydrogenase/fumarate reductase iron-sulfur protein family. As to quaternary structure, component of complex II composed of four subunits: a flavoprotein (FP), an iron-sulfur protein (IP), and a cytochrome b composed of a large and a small subunit. It depends on [2Fe-2S] cluster as a cofactor. [3Fe-4S] cluster is required as a cofactor. Requires [4Fe-4S] cluster as cofactor.

The protein localises to the mitochondrion inner membrane. It carries out the reaction a quinone + succinate = fumarate + a quinol. The protein operates within carbohydrate metabolism; tricarboxylic acid cycle; fumarate from succinate (eukaryal route): step 1/1. In terms of biological role, subunit of succinate dehydrogenase (SDH) that is involved in complex II of the mitochondrial electron transport chain and is responsible for transferring electrons from succinate to ubiquinone (coenzyme Q). SDH1 and SDH2 form the catalytic dimer. Electrons flow from succinate to the FAD bound to SDH1, and sequentially through the iron-sulfur clusters bound to SDH2 and enter the membrane dimer formed by SDH3 and SDH4. The chain is Succinate dehydrogenase [ubiquinone] iron-sulfur subunit, mitochondrial (SDH2) from Saccharomyces cerevisiae (strain ATCC 204508 / S288c) (Baker's yeast).